The chain runs to 297 residues: MGAQIRVYRQKIASTSSMRKIFKAMELIATSRITKARERVSASLPYANAITRAVSAVSSQHDIDHVLTTEPENPTRAAVLIMSSDRGLAGAYSANVLRKAEQLLTRLGEEGKDVDVYVVGRKAQTYFDFRGRGYKKLWTGQTDAPVAERAAEIGEVLVDAFLTDTADGGVDEIHVVFTEFVSLVKQNPHVVRLLPLEVVEEEAATAEDVLPLYEYEPDAEEVLDALLPKYIESRIFNAMLQSAASELANRQRAMKSAGDNATSLIKDYTLLMNNARQAEITQELTELIAGADALNNS.

It belongs to the ATPase gamma chain family. In terms of assembly, F-type ATPases have 2 components, CF(1) - the catalytic core - and CF(0) - the membrane proton channel. CF(1) has five subunits: alpha(3), beta(3), gamma(1), delta(1), epsilon(1). CF(0) has three main subunits: a, b and c.

It localises to the cell membrane. Its function is as follows. Produces ATP from ADP in the presence of a proton gradient across the membrane. The gamma chain is believed to be important in regulating ATPase activity and the flow of protons through the CF(0) complex. The polypeptide is ATP synthase gamma chain (Micrococcus luteus (strain ATCC 4698 / DSM 20030 / JCM 1464 / CCM 169 / CCUG 5858 / IAM 1056 / NBRC 3333 / NCIMB 9278 / NCTC 2665 / VKM Ac-2230) (Micrococcus lysodeikticus)).